Reading from the N-terminus, the 222-residue chain is N-(5'-phosphoribosyl)anthranilate isomerase (222 aa).

This sequence belongs to the TrpF family.

It catalyses the reaction N-(5-phospho-beta-D-ribosyl)anthranilate = 1-(2-carboxyphenylamino)-1-deoxy-D-ribulose 5-phosphate. The protein operates within amino-acid biosynthesis; L-tryptophan biosynthesis; L-tryptophan from chorismate: step 3/5. In Rhizobium leguminosarum bv. trifolii (strain WSM2304), this protein is N-(5'-phosphoribosyl)anthranilate isomerase.